We begin with the raw amino-acid sequence, 225 residues long: Ribose-5-phosphate isomerase A (225 aa).

Substrate-binding positions include 27–30 (SGST), 82–85 (DGAD), and 95–98 (KGGG). Glutamate 104 acts as the Proton acceptor in catalysis. Lysine 122 is a substrate binding site.

It belongs to the ribose 5-phosphate isomerase family. As to quaternary structure, homodimer.

The enzyme catalyses aldehydo-D-ribose 5-phosphate = D-ribulose 5-phosphate. The protein operates within carbohydrate degradation; pentose phosphate pathway; D-ribose 5-phosphate from D-ribulose 5-phosphate (non-oxidative stage): step 1/1. In terms of biological role, catalyzes the reversible conversion of ribose-5-phosphate to ribulose 5-phosphate. The chain is Ribose-5-phosphate isomerase A from Archaeoglobus fulgidus (strain ATCC 49558 / DSM 4304 / JCM 9628 / NBRC 100126 / VC-16).